Consider the following 228-residue polypeptide: Ribonuclease 3 (228 aa).

Positions 5-134 constitute an RNase III domain; sequence RSKLEKDYGI…FLGALLLDKG (130 aa). Glutamate 47 lines the Mg(2+) pocket. Aspartate 51 is an active-site residue. 2 residues coordinate Mg(2+): aspartate 120 and glutamate 123. The active site involves glutamate 123. The DRBM domain occupies 160–228; the sequence is DYKTSLQELL…AAKNALATLQ (69 aa).

Belongs to the ribonuclease III family. In terms of assembly, homodimer. The cofactor is Mg(2+).

The protein localises to the cytoplasm. It carries out the reaction Endonucleolytic cleavage to 5'-phosphomonoester.. Functionally, digests double-stranded RNA. Involved in the processing of primary rRNA transcript to yield the immediate precursors to the large and small rRNAs (23S and 16S). Processes some mRNAs, and tRNAs when they are encoded in the rRNA operon. Processes pre-crRNA and tracrRNA of type II CRISPR loci if present in the organism. The sequence is that of Ribonuclease 3 from Streptococcus agalactiae serotype III (strain NEM316).